Reading from the N-terminus, the 345-residue chain is Anthranilate phosphoribosyltransferase (345 aa).

Residues G84, 87–88 (GD), T92, 94–97 (NIST), 112–120 (KHGNRSVSS), and S124 contribute to the 5-phospho-alpha-D-ribose 1-diphosphate site. An anthranilate-binding site is contributed by G84. Residue S96 participates in Mg(2+) binding. Residue N115 coordinates anthranilate. Residue R170 participates in anthranilate binding. D229 and E230 together coordinate Mg(2+).

This sequence belongs to the anthranilate phosphoribosyltransferase family. Homodimer. It depends on Mg(2+) as a cofactor.

The catalysed reaction is N-(5-phospho-beta-D-ribosyl)anthranilate + diphosphate = 5-phospho-alpha-D-ribose 1-diphosphate + anthranilate. Its pathway is amino-acid biosynthesis; L-tryptophan biosynthesis; L-tryptophan from chorismate: step 2/5. Functionally, catalyzes the transfer of the phosphoribosyl group of 5-phosphorylribose-1-pyrophosphate (PRPP) to anthranilate to yield N-(5'-phosphoribosyl)-anthranilate (PRA). The polypeptide is Anthranilate phosphoribosyltransferase (Xanthomonas campestris pv. campestris (strain B100)).